Reading from the N-terminus, the 627-residue chain is Pro-interleukin-16 (627 aa).

Disordered stretches follow at residues 34–136 (HMPL…SIKQ), 162–267 (SSGE…LTRS), and 316–337 (GASPTSLSNEDSAANGCAETSG). S217 carries the post-translational modification Phosphoserine. Residues 318 to 337 (SPTSLSNEDSAANGCAETSG) are compositionally biased toward polar residues. An interaction with PPP1R12A, PPP1R12B and PPP1R12C region spans residues 401–497 (KQLDSIHVTI…IVTRKLTPET (97 aa)). PDZ domains are found at residues 407–492 (HVTI…VTRK) and 529–614 (TVTL…IKRK).

In terms of assembly, homotetramer. Pro-interleukin-16 interacts (via PDZ 2 domain) with PPP1R12A, PPP1R12B and PPP1R12C. Pro-interleukin-16 interacts with GRIN2A. Pro-interleukin-16 interacts with GABPB1. Pro-interleukin-16 interacts (via PDZ 3 domain) with HDAC3.

It is found in the secreted. The protein resides in the cytoplasm. It localises to the nucleus. Interleukin-16 stimulates a migratory response in CD4+ lymphocytes, monocytes, and eosinophils. Primes CD4+ T-cells for IL-2 and IL-15 responsiveness. Also induces T-lymphocyte expression of interleukin 2 receptor. Ligand for CD4. Functionally, pro-interleukin-16 is involved in cell cycle progression in T-cells. Appears to be involved in transcriptional regulation of SKP2 and is probably part of a transcriptional repression complex on the core promoter of the SKP2 gene. May act as a scaffold for GABPB1 (the DNA-binding subunit the GABP transcription factor complex) and HDAC3 thus maintaining transcriptional repression and blocking cell cycle progression in resting T-cells. This is Pro-interleukin-16 (IL16) from Saimiri sciureus (Common squirrel monkey).